A 93-amino-acid polypeptide reads, in one-letter code: UPF0297 protein PEPE_1262 (93 aa).

The protein belongs to the UPF0297 family.

The polypeptide is UPF0297 protein PEPE_1262 (Pediococcus pentosaceus (strain ATCC 25745 / CCUG 21536 / LMG 10740 / 183-1w)).